Reading from the N-terminus, the 282-residue chain is MQQPFNYPYPQIFWVDSSATSPWASPGSVFPCPASVPGRPGQRRPPPPPPPPPPPPTLLPSRPLPPLPPPSLKKKRDHNAGLCLLVMFFMVLVALVGLGLGMFQLFHLQKELTELRESASQRHTESSLEKQIGHPNLPSEKKELRKVAHLTGKPNSRSIPLEWEDTYGIALVSGVKYMKGSLVINDTGLYFVYSKVYFRGQYCNNQPLSHKVYTRNSRYPQDLVLMEGKMMNYCTTGQMWARSSYLGAVFNLTSADHLYVNVSELSLVNFEESKTFFGLYKL.

Topologically, residues 1 to 82 are cytoplasmic; the sequence is MQQPFNYPYP…KKKRDHNAGL (82 aa). The tract at residues 30–73 is disordered; that stretch reads FPCPASVPGRPGQRRPPPPPPPPPPPPTLLPSRPLPPLPPPSLK. Positions 43-71 are enriched in pro residues; that stretch reads RRPPPPPPPPPPPPTLLPSRPLPPLPPPS. Residues 83 to 103 traverse the membrane as a helical; Signal-anchor for type II membrane protein segment; sequence CLLVMFFMVLVALVGLGLGMF. The Extracellular segment spans residues 104–282; that stretch reads QLFHLQKELT…SKTFFGLYKL (179 aa). Over residues 119–132 the composition is skewed to basic and acidic residues; the sequence is ASQRHTESSLEKQI. Residues 119-140 form a disordered region; sequence ASQRHTESSLEKQIGHPNLPSE. The THD domain maps to 146-282; sequence KVAHLTGKPN…SKTFFGLYKL (137 aa). Asn185 is a glycosylation site (N-linked (GlcNAc...) asparagine). Cys203 and Cys234 are joined by a disulfide. Asn251 and Asn261 each carry an N-linked (GlcNAc...) asparagine glycan.

This sequence belongs to the tumor necrosis factor family. In terms of assembly, homotrimer. Interacts with ARHGAP9, BAIAP2L1, BTK, CACNB3, CACNB4, CRK, DLG2, DNMBP, DOCK4, EPS8L3, FGR, FYB1, FYN, HCK, ITK, ITSN2, KALRN, LYN, MACC1, MIA, MPP4, MYO15A, NCF1, NCK1, NCK2, NCKIPSD, OSTF1, PIK3R1, PSTPIP1, RIMBP3C, SAMSN1, SH3GL3, SH3PXD2B, SH3PXD2A, SH3RF2, SKAP2, SNX33, SNX9, SORBS3, SPTA1, SRC, SRGAP1, SRGAP2, SRGAP3, TEC, TJP3 and YES1. In terms of processing, the soluble form derives from the membrane form by proteolytic processing. The membrane-bound form undergoes two successive intramembrane proteolytic cleavages. The first one is processed by ADAM10 producing an N-terminal fragment, which lacks the receptor-binding extracellular domain. This ADAM10-processed FasL (FasL APL) remnant form is still membrane anchored and further processed by SPPL2A that liberates the FasL intracellular domain (FasL ICD). FasL shedding by ADAM10 is a prerequisite for subsequent intramembrane cleavage by SPPL2A in T-cells. Phosphorylated by FGR on tyrosine residues; this is required for ubiquitination and subsequent internalization. Post-translationally, N-glycosylated. Glycosylation enhances apoptotic activity. In terms of processing, monoubiquitinated.

The protein resides in the cell membrane. It is found in the cytoplasmic vesicle lumen. The protein localises to the lysosome lumen. It localises to the secreted. Its subcellular location is the nucleus. Cytokine that binds to TNFRSF6/FAS, a receptor that transduces the apoptotic signal into cells. Involved in cytotoxic T-cell-mediated apoptosis, natural killer cell-mediated apoptosis and in T-cell development. Initiates fratricidal/suicidal activation-induced cell death (AICD) in antigen-activated T-cells contributing to the termination of immune responses. TNFRSF6/FAS-mediated apoptosis also has a role in the induction of peripheral tolerance. Binds to TNFRSF6B/DcR3, a decoy receptor that blocks apoptosis. Its function is as follows. Induces FAS-mediated activation of NF-kappa-B, initiating non-apoptotic signaling pathways. Can induce apoptosis but does not appear to be essential for this process. Functionally, cytoplasmic form induces gene transcription inhibition. This Sus scrofa (Pig) protein is Tumor necrosis factor ligand superfamily member 6 (FASLG).